The primary structure comprises 123 residues: Ribonuclease P protein component 2 (123 aa).

The protein belongs to the eukaryotic/archaeal RNase P protein component 2 family. As to quaternary structure, consists of a catalytic RNA component and at least 4 protein subunits.

It carries out the reaction Endonucleolytic cleavage of RNA, removing 5'-extranucleotides from tRNA precursor.. Its function is as follows. Part of ribonuclease P, a protein complex that generates mature tRNA molecules by cleaving their 5'-ends. In Aeropyrum pernix (strain ATCC 700893 / DSM 11879 / JCM 9820 / NBRC 100138 / K1), this protein is Ribonuclease P protein component 2.